A 221-amino-acid chain; its full sequence is ATP-dependent dethiobiotin synthetase BioD (221 aa).

11-16 is a binding site for ATP; the sequence is DVGKTF. Mg(2+) is bound at residue Thr-15. Residue Lys-35 is part of the active site. Thr-39 is a substrate binding site. ATP is bound by residues Asp-44 and 103–106; that span reads EGAG. The Mg(2+) site is built by Asp-44 and Glu-103.

The protein belongs to the dethiobiotin synthetase family. In terms of assembly, homodimer. It depends on Mg(2+) as a cofactor.

It is found in the cytoplasm. It carries out the reaction (7R,8S)-7,8-diammoniononanoate + CO2 + ATP = (4R,5S)-dethiobiotin + ADP + phosphate + 3 H(+). It participates in cofactor biosynthesis; biotin biosynthesis; biotin from 7,8-diaminononanoate: step 1/2. Its function is as follows. Catalyzes a mechanistically unusual reaction, the ATP-dependent insertion of CO2 between the N7 and N8 nitrogen atoms of 7,8-diaminopelargonic acid (DAPA, also called 7,8-diammoniononanoate) to form a ureido ring. This is ATP-dependent dethiobiotin synthetase BioD from Leptospira interrogans serogroup Icterohaemorrhagiae serovar copenhageni (strain Fiocruz L1-130).